The chain runs to 736 residues: Nucleoporin nup60 (736 aa).

The disordered stretch occupies residues M1–R46. The segment covering T19 to N31 has biased composition (basic and acidic residues). Positions H32–I43 are enriched in polar residues. Phosphoserine is present on residues S157, S159, S161, and S162. 5 disordered regions span residues R178–K210, D295–S321, T338–T519, A565–F614, and E647–F701. Composition is skewed to polar residues over residues R196–K210 and D295–N314. The segment covering Q375 to E397 has biased composition (basic and acidic residues). A compositionally biased stretch (polar residues) spans S456–N473. Low complexity-rich tracts occupy residues A474 to S505 and E573 to S587. Positions Q588–S597 are enriched in polar residues. Positions E664–S692 are enriched in basic and acidic residues.

In terms of assembly, component of the nuclear pore complex (NPC). NPC constitutes the exclusive means of nucleocytoplasmic transport. NPCs allow the passive diffusion of ions and small molecules and the active, nuclear transport receptor-mediated bidirectional transport of macromolecules such as proteins, RNAs, ribonucleoparticles (RNPs), and ribosomal subunits across the nuclear envelope.

It localises to the nucleus. Its subcellular location is the nuclear pore complex. The protein localises to the nucleus membrane. In terms of biological role, functions as a component of the nuclear pore complex (NPC). NPC components, collectively referred to as nucleoporins (NUPs), can play the role of both NPC structural components and of docking or interaction partners for transiently associated nuclear transport factors. Active directional transport is assured by both, a Phe-Gly (FG) repeat affinity gradient for these transport factors across the NPC and a transport cofactor concentration gradient across the nuclear envelope. The chain is Nucleoporin nup60 (nup60) from Schizosaccharomyces pombe (strain 972 / ATCC 24843) (Fission yeast).